Consider the following 285-residue polypeptide: Phosphatidylserine decarboxylase proenzyme (285 aa).

Catalysis depends on charge relay system; for autoendoproteolytic cleavage activity residues D89, H146, and S252. S252 (schiff-base intermediate with substrate; via pyruvic acid; for decarboxylase activity) is an active-site residue. A Pyruvic acid (Ser); by autocatalysis modification is found at S252.

The protein belongs to the phosphatidylserine decarboxylase family. PSD-B subfamily. Prokaryotic type I sub-subfamily. As to quaternary structure, heterodimer of a large membrane-associated beta subunit and a small pyruvoyl-containing alpha subunit. Pyruvate is required as a cofactor. Post-translationally, is synthesized initially as an inactive proenzyme. Formation of the active enzyme involves a self-maturation process in which the active site pyruvoyl group is generated from an internal serine residue via an autocatalytic post-translational modification. Two non-identical subunits are generated from the proenzyme in this reaction, and the pyruvate is formed at the N-terminus of the alpha chain, which is derived from the carboxyl end of the proenzyme. The autoendoproteolytic cleavage occurs by a canonical serine protease mechanism, in which the side chain hydroxyl group of the serine supplies its oxygen atom to form the C-terminus of the beta chain, while the remainder of the serine residue undergoes an oxidative deamination to produce ammonia and the pyruvoyl prosthetic group on the alpha chain. During this reaction, the Ser that is part of the protease active site of the proenzyme becomes the pyruvoyl prosthetic group, which constitutes an essential element of the active site of the mature decarboxylase.

It is found in the cell membrane. The catalysed reaction is a 1,2-diacyl-sn-glycero-3-phospho-L-serine + H(+) = a 1,2-diacyl-sn-glycero-3-phosphoethanolamine + CO2. It participates in phospholipid metabolism; phosphatidylethanolamine biosynthesis; phosphatidylethanolamine from CDP-diacylglycerol: step 2/2. In terms of biological role, catalyzes the formation of phosphatidylethanolamine (PtdEtn) from phosphatidylserine (PtdSer). This chain is Phosphatidylserine decarboxylase proenzyme, found in Vibrio vulnificus (strain CMCP6).